Here is a 735-residue protein sequence, read N- to C-terminus: Protein PAT1 homolog 2 (735 aa).

Disordered regions lie at residues Thr39–Lys93 and Gln336–Tyr366. 2 stretches are compositionally biased toward basic and acidic residues: residues Glu49–Lys59 and Pro67–Lys93. Low complexity predominate over residues Ser346 to Arg356.

It belongs to the PAT1 family. As to quaternary structure, interacts with ribonucleoprotein complex components. Interacts with cpeb.

Its subcellular location is the cytoplasm. The protein resides in the nucleus. Its function is as follows. RNA-binding protein that acts as a translational repressor. The chain is Protein PAT1 homolog 2 (patl2) from Xenopus tropicalis (Western clawed frog).